Here is a 431-residue protein sequence, read N- to C-terminus: Metal-binding activator 1 (431 aa).

The copper-fist DNA-binding region spans 1-40 (MILIDDIKYACMECVRGHRSSSCKHHERPLLQVRSKGRPG). Positions 11, 14, 23, and 25 each coordinate Zn(2+).

Its subcellular location is the nucleus. Functionally, copper ion-sensing transcription factor which activates transcription of the CTR1 copper transporter under low-copper conditions. Promotes filamentous and invasive growth. This chain is Metal-binding activator 1 (MAC1), found in Candida albicans (strain SC5314 / ATCC MYA-2876) (Yeast).